The chain runs to 348 residues: Killer cell immunoglobulin-like receptor 2DL1 (348 aa).

An N-terminal signal peptide occupies residues 1–21; the sequence is MSLLVVSMACVGFFLLQGAWP. At 22-245 the chain is on the extracellular side; the sequence is HEGVHRKPSL…SKTGNPRHLH (224 aa). Ig-like C2-type domains are found at residues 42 to 107 and 142 to 205; these read EETV…VTHS and GENV…FHDS. Cys49 and Cys100 are oxidised to a cystine. Residues Asn67, Asn84, Asn144, and Asn178 are each glycosylated (N-linked (GlcNAc...) asparagine). Cys149 and Cys198 are disulfide-bonded. Residues 220-239 are disordered; the sequence is VTGNPSNSWPSPTEPSSKTG. Residues 246 to 264 form a helical membrane-spanning segment; the sequence is ILIGTSVVIILFILLFFLL. The Cytoplasmic segment spans residues 265–348; the sequence is HRWCSNKKNA…ESRSKVVSCP (84 aa).

Belongs to the immunoglobulin superfamily. In terms of assembly, interacts with ARRB2. Interacts with PTPN6; the interaction is enhanced by ARRB2. Interacts with PTPN11; the interaction is enhanced by ARRB2. Expressed by NK cells.

The protein localises to the cell membrane. Functionally, receptor on natural killer (NK) cells for some HLA-C alleles such as w4 and w6. Inhibits the activity of NK cells thus preventing cell lysis. This Homo sapiens (Human) protein is Killer cell immunoglobulin-like receptor 2DL1.